The following is a 339-amino-acid chain: Neutrophil cytosol factor 4 (339 aa).

The 122-residue stretch at 19 to 140 (DVAVSANIAD…IFFYQSAYDA (122 aa)) folds into the PX domain. A 1,2-diacyl-sn-glycero-3-phospho-(1D-myo-inositol-3-phosphate) is bound by residues 58-60 (RYR) and 92-94 (KVY). At threonine 154 the chain carries Phosphothreonine. The SH3 domain occupies 170–229 (MEAPRAEALFDFTGNSKLELSFKAGDVIFLLSKINKDWLEGTSQGATGIFPGSFVKILKD). Residues 237-329 (TNWLRCYFYE…FPWKLHVTQK (93 aa)) form the PB1 domain. The residue at position 315 (serine 315) is a Phosphoserine.

As to quaternary structure, component of the phagocyte NADPH oxidase complex composed of an obligatory core heterodimer formed by the membrane proteins CYBA and CYBB and the cytosolic regulatory subunits NCF1/p47-phox, NCF2/p67-phox, NCF4/p40-phox and the small GTPase RAC1 or RAC2. Part of a cytosolic complex composed at least by NCF1, NCF2 and NCF4. Interacts with NCF2. Interacts with NCF1. The NCF2-NCF4 complex interacts with GBP7 (via GB1/RHD3-type G domain).

The protein resides in the cytoplasm. It is found in the cytosol. The protein localises to the endosome membrane. Its subcellular location is the membrane. Subunit of the phagocyte NADPH oxidase complex that mediates the transfer of electrons from cytosolic NADPH to O2 to produce the superoxide anion (O2(-)). In the activated complex, electrons are first transferred from NADPH to flavin adenine dinucleotide (FAD) and subsequently transferred via two heme molecules to molecular oxygen, producing superoxide through an outer-sphere reaction. Activation of the NADPH oxidase complex is initiated by the assembly of cytosolic subunits of the NADPH oxidase complex with the core NADPH oxidase complex to form a complex at the plasma membrane or phagosomal membrane. This activation process is initiated by phosphorylation dependent binding of the cytosolic NCF1/p47-phox subunit to the C-terminus of CYBA/p22-phox. The sequence is that of Neutrophil cytosol factor 4 from Mus musculus (Mouse).